Here is a 395-residue protein sequence, read N- to C-terminus: MAEEPTYTAEQVNDVVHAGLGTVDFFLSRPVDGQSSLGKGSVPPGITAVLTNAAELKAKTAAAAPVKPKRKKIQHMTPAYTIADNGDPNRLPANTPIANPLIPIERPPGRMTDLDLATGTVTQGTYKGVELAKAGKNALLTRFSSGPSLTDQASSKDPNFKRGGEKLTDATKADIGGSGASPGSETKLRFMSGAIQHVPQLLPLTASSPVLVEPAPIGAENVKEIIEILRGLDLRMQSLEGKVDKILATSATITALKNEVTSLKANVATVEGMMTTMKIMDPSTPTNVPVEKIRKNLKDTPVIISGPLSESHITEGSDMIVLDELARPSLSSTKKIVRRPEPKKDLTGMKLMLIQLANDCMGKPDQKAEIVAKIHAATREAQLLDIKRSIIKSAI.

Over residues phenylalanine 143–aspartate 157 the composition is skewed to polar residues. Residues phenylalanine 143–glycine 183 are disordered. The segment covering proline 158–lysine 172 has biased composition (basic and acidic residues). The segment at glutamate 220–serine 283 is multimerization.

Belongs to the rubulavirus/avulavirus P protein family. Homotetramer. Interacts (via multimerization domain) with polymerase L; this interaction forms the polymerase L-P complex. Interacts (via N-terminus) with N0 (via Ncore); this interaction allows P to chaperon N0 to avoid N polymerization before encapsidation. Interacts (via C-terminus) with N-RNA template; this interaction positions the polymerase on the template for both transcription and replication.

In terms of biological role, essential cofactor of the RNA polymerase L that plays a central role in the transcription and replication by forming the polymerase complex with RNA polymerase L and recruiting L to the genomic N-RNA template for RNA synthesis. Also plays a central role in the encapsidation of nascent RNA chains by forming the encapsidation complex with the nucleocapsid protein N (N-P complex). Acts as a chaperone for newly synthesized free N protein, so-called N0, allowing encapsidation of nascent RNA chains during replication. The nucleoprotein protein N prevents excessive phosphorylation of P, which leads to down-regulation of viral transcription/ replication. Participates, together with N, in the formation of viral factories (viroplasms), which are large inclusions in the host cytoplasm where replication takes place. The polypeptide is Phosphoprotein (P/V) (Simian virus 41 (SV41)).